We begin with the raw amino-acid sequence, 508 residues long: MGLPWYRVHTVVLNDPGRLIAVHLMHTSLVSGWAGSMAFYELAVFDPSDPVLNPMWRQGMFVLPFMTRLGITQSWGGWTISGETAANPGVWSYEGVAAAHIVLSGLLFAASIWHWVYWDLELFRDPRTSNPALDLPKIFGIHLFLSGVLCFGFGAFHVTGIFGPGIWVSDPYGITGTVQAVAPSWDATGFDPYNPGGISAHHIAAGILGVLAGLFHLCVRPPQRLYNGLRMGNIETVLSSSIAAVFWAAFVVSGTMWYGSAATPIELFGPTRYQWDLGFFQQEIERRVQTNLSEGKSASQAWAEIPEKLAFYDYIGNNPAKGGLFRAGAMNSGDGIAVGWLGHAVFKEKQGNELFVRRMPTFFETFPVVLVDKDGVVRADVPFRRSESKYSIEQVGVSVTFYGGELDGVTFNDPATVKKYARRAQLGEIFEFDRATLQSDGVFRASPRGWFTFAHLCFALLFFFGHIWHGARTIFRDVFAGIDADLDEQVEFGAFLKLGDTSTRRQSV.

The next 6 helical transmembrane spans lie at 21–36 (AVHLMHTSLVSGWAGS), 101–115 (IVLSGLLFAASIWHW), 140–156 (GIHLFLSGVLCFGFGAF), 203–218 (IAAGILGVLAGLFHLC), 237–252 (VLSSSIAAVFWAAFVV), and 457–472 (CFALLFFFGHIWHGAR).

Belongs to the PsbB/PsbC family. PsbB subfamily. In terms of assembly, PSII is composed of 1 copy each of membrane proteins PsbA, PsbB, PsbC, PsbD, PsbE, PsbF, PsbH, PsbI, PsbJ, PsbK, PsbL, PsbM, PsbT, PsbX, PsbY, PsbZ, Psb30/Ycf12, at least 3 peripheral proteins of the oxygen-evolving complex and a large number of cofactors. It forms dimeric complexes. Binds multiple chlorophylls. PSII binds additional chlorophylls, carotenoids and specific lipids. is required as a cofactor.

It is found in the plastid. Its subcellular location is the chloroplast thylakoid membrane. One of the components of the core complex of photosystem II (PSII). It binds chlorophyll and helps catalyze the primary light-induced photochemical processes of PSII. PSII is a light-driven water:plastoquinone oxidoreductase, using light energy to abstract electrons from H(2)O, generating O(2) and a proton gradient subsequently used for ATP formation. This is Photosystem II CP47 reaction center protein from Chlorella vulgaris (Green alga).